A 332-amino-acid polypeptide reads, in one-letter code: Ribosomal RNA small subunit methyltransferase C (332 aa).

The protein belongs to the methyltransferase superfamily. RsmC family. In terms of assembly, monomer.

Its subcellular location is the cytoplasm. It carries out the reaction guanosine(1207) in 16S rRNA + S-adenosyl-L-methionine = N(2)-methylguanosine(1207) in 16S rRNA + S-adenosyl-L-homocysteine + H(+). Specifically methylates the guanine in position 1207 of 16S rRNA in the 30S particle. This is Ribosomal RNA small subunit methyltransferase C from Pseudomonas aeruginosa (strain LESB58).